The chain runs to 213 residues: CASP-like protein 2A1 (213 aa).

The Cytoplasmic segment spans residues 1–41 (MSKMAEEKAAAVGGLGGAGAADAAQQQQLAAGEAAAARVRP). The chain crosses the membrane as a helical span at residues 42-62 (VETLLRAAPLGLCVAAMTVML). Topologically, residues 63–83 (RNQQSNEYGAVAYSDLGGFKY) are extracellular. A helical transmembrane segment spans residues 84-104 (LVYANGLCAAYSLVSAFYTAV). Over 105–113 (PRPATVSRS) the chain is Cytoplasmic. The helical transmembrane segment at 114 to 134 (WLVFLLDQVFTYLILAAGAAA) threads the bilayer. Topologically, residues 135-166 (AELLYLAYNGDKEVTWSEACGVFGSFCRQART) are extracellular. A helical transmembrane segment spans residues 167 to 187 (SVAITFGTVLCFILLSLISSY). Residues 188–213 (RLFSAYEAPPSSALGSKGVEIAAYPR) lie on the Cytoplasmic side of the membrane.

The protein belongs to the Casparian strip membrane proteins (CASP) family. As to quaternary structure, homodimer and heterodimers.

It localises to the cell membrane. The chain is CASP-like protein 2A1 from Zea mays (Maize).